A 103-amino-acid chain; its full sequence is Large ribosomal subunit protein eL14 (103 aa).

This sequence belongs to the eukaryotic ribosomal protein eL14 family.

In Ignicoccus hospitalis (strain KIN4/I / DSM 18386 / JCM 14125), this protein is Large ribosomal subunit protein eL14.